The sequence spans 188 residues: Tumor necrosis factor alpha-induced protein 8-like protein (188 aa).

The protein belongs to the TNFAIP8 family.

This Drosophila pseudoobscura pseudoobscura (Fruit fly) protein is Tumor necrosis factor alpha-induced protein 8-like protein.